The chain runs to 342 residues: MSKAYEQSGVNIHAGYEAVERMSSHVKRTMRKEVIGGLGGFGATFDLSQLNMTAPVLVSGTDGVGTKLKLAIDYGKHDSIGIDAVAMCVNDILTTGAEPLYFLDYIATNKVVPEVIEQIVKGISDACVETNTALIGGETAEMGEMYHEGEYDVAGFAVGAVEKDDYVDGSEVKEGQVVIGLASSGIHSNGYSLVRKLINESGIDLASNFDNRPFIDVFLEPTKLYVKPVLALKKEVSIKAMNHITGGGFYENIPRALPAGYAARIDTTSFPTPKIFDWLQQQGNIETNEMYNIFNMGIGYTVIVDEKDAPRALKILAEQNVEAYQIGHIVKNESTAIELLGV.

Belongs to the AIR synthase family.

The protein resides in the cytoplasm. The enzyme catalyses 2-formamido-N(1)-(5-O-phospho-beta-D-ribosyl)acetamidine + ATP = 5-amino-1-(5-phospho-beta-D-ribosyl)imidazole + ADP + phosphate + H(+). The protein operates within purine metabolism; IMP biosynthesis via de novo pathway; 5-amino-1-(5-phospho-D-ribosyl)imidazole from N(2)-formyl-N(1)-(5-phospho-D-ribosyl)glycinamide: step 2/2. This is Phosphoribosylformylglycinamidine cyclo-ligase from Staphylococcus aureus (strain MRSA252).